The sequence spans 118 residues: Small ribosomal subunit protein uS13 (118 aa).

The interval Gly-94–Lys-118 is disordered.

This sequence belongs to the universal ribosomal protein uS13 family. As to quaternary structure, part of the 30S ribosomal subunit. Forms a loose heterodimer with protein S19. Forms two bridges to the 50S subunit in the 70S ribosome.

Functionally, located at the top of the head of the 30S subunit, it contacts several helices of the 16S rRNA. In the 70S ribosome it contacts the 23S rRNA (bridge B1a) and protein L5 of the 50S subunit (bridge B1b), connecting the 2 subunits; these bridges are implicated in subunit movement. Contacts the tRNAs in the A and P-sites. This is Small ribosomal subunit protein uS13 from Stenotrophomonas maltophilia (strain R551-3).